Here is an 835-residue protein sequence, read N- to C-terminus: Protein bicaudal D homolog 1 (835 aa).

Residues 1–264 (MAAEEALKTV…YINLSDSHIS (264 aa)) are a coiled coil. Residues 278-297 (EPNNDDKMNGHIHGPLGKLN) form a disordered region. The stretch at 320-519 (ELNISEIQKL…TFSEELAQLY (200 aa)) forms a coiled coil. Disordered stretches follow at residues 545–616 (RSGS…LDTS) and 800–835 (DHEQ…SAHN). The segment covering 557–572 (GLLSPRLSRRGVSSPV) has biased composition (low complexity). Basic and acidic residues predominate over residues 581–590 (VSKENTETSK). The span at 591 to 604 (EPSPTKTPTISPVI) shows a compositional bias: low complexity. A coiled-coil region spans residues 663–803 (IDKDKEALME…LEDLEFDHEQ (141 aa)). Residues 663–803 (IDKDKEALME…LEDLEFDHEQ (141 aa)) are interaction with RAB6A.

Belongs to the BicD family. In terms of assembly, interacts with RAB6A. Interacts (via C-terminus) with RAB6B (GTP-bound); the interaction is direct. Interacts with CLIP-115 and KIFC2. In terms of tissue distribution, expressed in the brain, heart and skeletal muscle.

The protein localises to the golgi apparatus. Functionally, regulates coat complex coatomer protein I (COPI)-independent Golgi-endoplasmic reticulum transport by recruiting the dynein-dynactin motor complex. The polypeptide is Protein bicaudal D homolog 1 (Bicd1) (Mus musculus (Mouse)).